A 300-amino-acid chain; its full sequence is Probable amino-acid ABC transporter periplasmic-binding protein y4tE (300 aa).

A signal peptide spans 1–27; that stretch reads MTHLKISKTAPAVARFLPAGRIASVAA.

Belongs to the bacterial solute-binding protein 3 family.

It is found in the periplasm. Probably part of the binding-protein-dependent transport system y4tEFGH for an amino acid. The sequence is that of Probable amino-acid ABC transporter periplasmic-binding protein y4tE from Sinorhizobium fredii (strain NBRC 101917 / NGR234).